The sequence spans 147 residues: Large ribosomal subunit protein uL15 (147 aa).

The disordered stretch occupies residues 1–62 (MKLHELKPAQ…GQQPLSRRMP (62 aa)). Composition is skewed to gly residues over residues 21 to 31 (RGIGSGTGKTS) and 42 to 52 (AGGGVRPGFEG).

This sequence belongs to the universal ribosomal protein uL15 family. Part of the 50S ribosomal subunit.

Binds to the 23S rRNA. The sequence is that of Large ribosomal subunit protein uL15 from Desulfitobacterium hafniense (strain DSM 10664 / DCB-2).